We begin with the raw amino-acid sequence, 727 residues long: UvrABC system protein C (727 aa).

One can recognise a GIY-YIG domain in the interval 16–95 (VDPGVYKFRD…IKEFDPRFNV (80 aa)). The UVR domain occupies 208-243 (DRLVRQLEARMQEASEELDFETAARLRDDVGALRRA). Disordered regions lie at residues 503–527 (DADQ…QTGR) and 679–727 (SADV…TGVE). Positions 701–711 (NGADIPREPVE) are enriched in basic and acidic residues. Polar residues predominate over residues 718-727 (QSASQRTGVE).

Belongs to the UvrC family. As to quaternary structure, interacts with UvrB in an incision complex.

The protein localises to the cytoplasm. Its function is as follows. The UvrABC repair system catalyzes the recognition and processing of DNA lesions. UvrC both incises the 5' and 3' sides of the lesion. The N-terminal half is responsible for the 3' incision and the C-terminal half is responsible for the 5' incision. This chain is UvrABC system protein C, found in Rhodococcus jostii (strain RHA1).